The primary structure comprises 166 residues: Large ribosomal subunit protein eL21 (166 aa).

It belongs to the eukaryotic ribosomal protein eL21 family. As to quaternary structure, component of the large ribosomal subunit.

It localises to the cytoplasm. The protein resides in the cytosol. The protein localises to the endoplasmic reticulum. In terms of biological role, component of the large ribosomal subunit. The ribosome is a large ribonucleoprotein complex responsible for the synthesis of proteins in the cell. This chain is Large ribosomal subunit protein eL21 (RPL21), found in Entamoeba histolytica (strain ATCC 30459 / HM-1:IMSS / ABRM).